A 577-amino-acid chain; its full sequence is Arginine--tRNA ligase (577 aa).

Residues 132-142 carry the 'HIGH' region motif; the sequence is ANPTGPLHVGH.

It belongs to the class-I aminoacyl-tRNA synthetase family. As to quaternary structure, monomer.

It is found in the cytoplasm. It catalyses the reaction tRNA(Arg) + L-arginine + ATP = L-arginyl-tRNA(Arg) + AMP + diphosphate. The sequence is that of Arginine--tRNA ligase from Herminiimonas arsenicoxydans.